We begin with the raw amino-acid sequence, 348 residues long: Phosphate acyltransferase (348 aa).

It belongs to the PlsX family. In terms of assembly, homodimer. Probably interacts with PlsY.

It localises to the cytoplasm. The catalysed reaction is a fatty acyl-[ACP] + phosphate = an acyl phosphate + holo-[ACP]. It functions in the pathway lipid metabolism; phospholipid metabolism. Catalyzes the reversible formation of acyl-phosphate (acyl-PO(4)) from acyl-[acyl-carrier-protein] (acyl-ACP). This enzyme utilizes acyl-ACP as fatty acyl donor, but not acyl-CoA. This chain is Phosphate acyltransferase, found in Rhizobium leguminosarum bv. trifolii (strain WSM2304).